Reading from the N-terminus, the 257-residue chain is Ribonuclease HII (257 aa).

In terms of domain architecture, RNase H type-2 spans 71–257 (ELIAGIDEVG…EPIKSMVNFK (187 aa)). Residues Asp77, Glu78, and Asp169 each contribute to the a divalent metal cation site.

Belongs to the RNase HII family. It depends on Mn(2+) as a cofactor. Mg(2+) serves as cofactor.

Its subcellular location is the cytoplasm. It carries out the reaction Endonucleolytic cleavage to 5'-phosphomonoester.. In terms of biological role, endonuclease that specifically degrades the RNA of RNA-DNA hybrids. The chain is Ribonuclease HII (rnhB) from Lactococcus lactis subsp. cremoris (strain MG1363).